Reading from the N-terminus, the 216-residue chain is MAATNTILAFSSPSRLLIPPSSNPSTLRSSFRGVSLNNNNLHRLQSVSFAVKAPSKALTVVSAAKKAVAVLKGTSDVEGVVTLTQDDSGPTTVNVRITGLTPGPHGFHLHEFGDTTNGCISTGPHFNPNNMTHGAPEDECRHAGDLGNINANADGVAETTIVDNQIPLTGPNSVVGRAFVVHELKDDLGKGGHELSLTTGNAGGRLACGVIGLTPL.

The N-terminal 62 residues, 1-62 (MAATNTILAF…APSKALTVVS (62 aa)), are a transit peptide targeting the chloroplast. Cu cation-binding residues include H108, H110, and H125. The cysteines at positions 119 and 208 are disulfide-linked. The Zn(2+) site is built by H125, H133, H142, and D145. H182 is a Cu cation binding site.

It belongs to the Cu-Zn superoxide dismutase family. Homotetramer. Cu cation is required as a cofactor. Requires Zn(2+) as cofactor. As to expression, expressed in leaves (at protein level). The spatial localization is regulated by miR398-mediated silencing. Mostly present in flowers, old rosette leaves and inflorescence, and, to a lower extent, in cauline leaves, stems and roots.

It localises to the plastid. Its subcellular location is the chloroplast. The catalysed reaction is 2 superoxide + 2 H(+) = H2O2 + O2. In terms of biological role, destroys radicals which are normally produced within the cells and which are toxic to biological systems. Mediates tolerance to stress, including photo-oxidative stress. This chain is Superoxide dismutase [Cu-Zn] 2, chloroplastic (CSD2), found in Arabidopsis thaliana (Mouse-ear cress).